Consider the following 657-residue polypeptide: Glycogen debranching enzyme (657 aa).

Asp-336 (nucleophile) is an active-site residue. Catalysis depends on Glu-371, which acts as the Proton donor. Residues 458 to 467 are compositionally biased toward basic and acidic residues; that stretch reads NEANGEENRD. A disordered region spans residues 458–479; sequence NEANGEENRDGTNNNYSNNHGK.

Belongs to the glycosyl hydrolase 13 family.

The catalysed reaction is Hydrolysis of (1-&gt;6)-alpha-D-glucosidic linkages to branches with degrees of polymerization of three or four glucose residues in limit dextrin.. The protein operates within glycan degradation; glycogen degradation. Functionally, removes maltotriose and maltotetraose chains that are attached by 1,6-alpha-linkage to the limit dextrin main chain, generating a debranched limit dextrin. The chain is Glycogen debranching enzyme from Escherichia coli (strain SE11).